The following is a 913-amino-acid chain: MGPEALSSLLLLLLVASGDADMKGHFDPAKCRYALGMQDRTIPDSDISASSSWSDSTAARHSRLESSDGDGAWCPAGSVFPKEEEYLQVDLQRLHLVALVGTQGRHAGGLGKEFSRSYRLRYSRDGRRWMGWKDRWGQEVISGNEDPEGVVLKDLGPPMVARLVRFYPRADRVMSVCLRVELYGCLWRDGLLSYTAPVGQTMYLSEAVYLNDSTYDGHTVGGLQYGGLGQLADGVVGLDDFRKSQELRVWPGYDYVGWSNHSFSSGYVEMEFEFDRLRAFQAMQVHCNNMHTLGARLPGGVECRFRRGPAMAWEGEPMRHNLGGNLGDPRARAVSVPLGGRVARFLQCRFLFAGPWLLFSEISFISDVVNNSSPALGGTFPPAPWWPPGPPPTNFSSLELEPRGQQPVAKAEGSPTAILIGCLVAIILLLLLIIALMLWRLHWRRLLSKAERRVLEEELTVHLSVPGDTILINNRPGPREPPPYQEPRPRGNPPHSAPCVPNGSALLLSNPAYRLLLATYARPPRGPGPPTPAWAKPTNTQAYSGDYMEPEKPGAPLLPPPPQNSVPHYAEADIVTLQGVTGGNTYAVPALPPGAVGDGPPRVDFPRSRLRFKEKLGEGQFGEVHLCEVDSPQDLVSLDFPLNVRKGHPLLVAVKILRPDATKNARNDFLKEVKIMSRLKDPNIIRLLGVCVQDDPLCMITDYMENGDLNQFLSAHQLEDKAAEGAPGDGQAAQGPTISYPMLLHVAAQIASGMRYLATLNFVHRDLATRNCLVGENFTIKIADFGMSRNLYAGDYYRVQGRAVLPIRWMAWECILMGKFTTASDVWAFGVTLWEVLMLCRAQPFGQLTDEQVIENAGEFFRDQGRQVYLSRPPACPQGLYELMLRCWSRESEQRPPFSQLHRFLAEDALNTV.

The N-terminal stretch at 1–18 (MGPEALSSLLLLLLVASG) is a signal peptide. The Extracellular segment spans residues 21–417 (DMKGHFDPAK…VAKAEGSPTA (397 aa)). One can recognise an F5/8 type C domain in the interval 31–185 (CRYALGMQDR…VCLRVELYGC (155 aa)). 2 disulfide bridges follow: Cys-31-Cys-185 and Cys-74-Cys-177. Residues 192–367 (LSYTAPVGQT…LFSEISFISD (176 aa)) are DS-like domain. Residues Asn-211, Gln-230, Asp-233, Val-235, Tyr-253, and Tyr-255 each coordinate Ca(2+). Asn-211 carries N-linked (GlcNAc...) asparagine glycosylation. An N-linked (GlcNAc...) asparagine glycan is attached at Asn-260. Cys-303 and Cys-348 are oxidised to a cystine. Residues Ser-360 and Glu-361 each coordinate Ca(2+). Asn-370 and Asn-394 each carry an N-linked (GlcNAc...) asparagine glycan. A helical transmembrane segment spans residues 418 to 438 (ILIGCLVAIILLLLLIIALML). Over 439–913 (WRLHWRRLLS…FLAEDALNTV (475 aa)) the chain is Cytoplasmic. The tract at residues 470–499 (ILINNRPGPREPPPYQEPRPRGNPPHSAPC) is disordered. Over residues 479–496 (REPPPYQEPRPRGNPPHS) the composition is skewed to pro residues. A PPxY motif motif is present at residues 481-484 (PPPY). Residues Tyr-484, Tyr-513, and Tyr-520 each carry the phosphotyrosine; by autocatalysis modification. Residues 610–905 (LRFKEKLGEG…PPFSQLHRFL (296 aa)) form the Protein kinase domain. 616–624 (LGEGQFGEV) contacts ATP. Ser-631 carries the post-translational modification Phosphoserine. Lys-655 is an ATP binding site. Tyr-740 carries the post-translational modification Phosphotyrosine; by autocatalysis. The Proton acceptor role is filled by Asp-766. Tyr-792, Tyr-796, and Tyr-797 each carry phosphotyrosine; by autocatalysis.

The protein belongs to the protein kinase superfamily. Tyr protein kinase family. Insulin receptor subfamily. As to quaternary structure, homodimer. Interacts (via PPxY motif) with WWC1 (via WW domains) in a collagen-regulated manner. Forms a tripartite complex with WWC1 and PRKCZ, but predominantly in the absence of collagen. Interacts (tyrosine phosphorylated) with SHC1. Interacts with SRC. Interacts with MYH9. Interacts with CDH1. Interacts with PTPN11. Interacts with NCK2. Post-translationally, autophosphorylated in response to fibrillar collagen binding. Glycosylation of Asn-211, but apparently not of Asn-260 or Asn-394, prevents autophosphorylation from occurring in the absence of collagen. In terms of tissue distribution, detected in T-47D, MDA-MB-175 and HBL-100 breast carcinoma cells, A-431 epidermoid carcinoma cells, SW48 and SNU-C2B colon carcinoma cells and Hs 294T melanoma cells (at protein level). Expressed at low levels in most adult tissues and is highest in the brain, lung, placenta and kidney. Lower levels of expression are detected in melanocytes, heart, liver, skeletal muscle and pancreas. Abundant in breast carcinoma cell lines. In the colonic mucosa, expressed in epithelia but not in the connective tissue of the lamina propria. In the thyroid gland, expressed in the epithelium of the thyroid follicles. In pancreas, expressed in the islets of Langerhans cells, but not in the surrounding epithelial cells of the exocrine pancreas. In kidney, expressed in the epithelia of the distal tubules. Not expressed in connective tissue, endothelial cells, adipose tissue, muscle cells or cells of hematopoietic origin.

It localises to the cell membrane. The protein resides in the secreted. It carries out the reaction L-tyrosyl-[protein] + ATP = O-phospho-L-tyrosyl-[protein] + ADP + H(+). Inhibited by the multi-targeted cancer drugs imatinib and ponatinib. Functionally, tyrosine kinase that functions as a cell surface receptor for fibrillar collagen and regulates cell attachment to the extracellular matrix, remodeling of the extracellular matrix, cell migration, differentiation, survival and cell proliferation. Collagen binding triggers a signaling pathway that involves SRC and leads to the activation of MAP kinases. Regulates remodeling of the extracellular matrix by up-regulation of the matrix metalloproteinases MMP2, MMP7 and MMP9, and thereby facilitates cell migration and wound healing. Required for normal blastocyst implantation during pregnancy, for normal mammary gland differentiation and normal lactation. Required for normal ear morphology and normal hearing. Promotes smooth muscle cell migration, and thereby contributes to arterial wound healing. Also plays a role in tumor cell invasion. Phosphorylates PTPN11. The chain is Epithelial discoidin domain-containing receptor 1 (DDR1) from Homo sapiens (Human).